The primary structure comprises 68 residues: Preprofallaxidin-5 (68 aa).

Positions 1–22 (MASLKKSLFLVLFLGFVSLSIC) are cleaved as a signal peptide. The propeptide occupies 23–51 (EEEKREDKEDEGENEEAEENHEERSEEKR). The tract at residues 24 to 50 (EEKREDKEDEGENEEAEENHEERSEEK) is disordered. Over residues 30–42 (KEDEGENEEAEEN) the composition is skewed to acidic residues. Position 64 is a leucine amide (Leu64). A propeptide is located at residue Ser68.

This sequence belongs to the frog skin active peptide (FSAP) family. Brevinin subfamily. In terms of tissue distribution, expressed by the skin glands.

It is found in the secreted. The chain is Preprofallaxidin-5 from Litoria fallax (Eastern dwarf tree frog).